The primary structure comprises 199 residues: Holliday junction branch migration complex subunit RuvA (199 aa).

Residues 1–63 (MIGCLIGEVF…EDAQQLYGFS (63 aa)) are domain I. The tract at residues 64–142 (DAQEKTIFRT…TLAQGTSSAA (79 aa)) is domain II. The flexible linker stretch occupies residues 143–150 (ALPQIQFV). The interval 150 to 199 (VSNSPVAEAEAALQSLGYKPLEAQKAVAAVKADYTESADIIRAALKSMMK) is domain III.

It belongs to the RuvA family. In terms of assembly, homotetramer. Forms an RuvA(8)-RuvB(12)-Holliday junction (HJ) complex. HJ DNA is sandwiched between 2 RuvA tetramers; dsDNA enters through RuvA and exits via RuvB. An RuvB hexamer assembles on each DNA strand where it exits the tetramer. Each RuvB hexamer is contacted by two RuvA subunits (via domain III) on 2 adjacent RuvB subunits; this complex drives branch migration. In the full resolvosome a probable DNA-RuvA(4)-RuvB(12)-RuvC(2) complex forms which resolves the HJ.

It localises to the cytoplasm. In terms of biological role, the RuvA-RuvB-RuvC complex processes Holliday junction (HJ) DNA during genetic recombination and DNA repair, while the RuvA-RuvB complex plays an important role in the rescue of blocked DNA replication forks via replication fork reversal (RFR). RuvA specifically binds to HJ cruciform DNA, conferring on it an open structure. The RuvB hexamer acts as an ATP-dependent pump, pulling dsDNA into and through the RuvAB complex. HJ branch migration allows RuvC to scan DNA until it finds its consensus sequence, where it cleaves and resolves the cruciform DNA. This is Holliday junction branch migration complex subunit RuvA from Acinetobacter baumannii (strain AB307-0294).